Reading from the N-terminus, the 266-residue chain is rRNA adenine N-6-methyltransferase (266 aa).

S-adenosyl-L-methionine contacts are provided by H14, T16, G41, E62, D87, and N103.

The protein belongs to the class I-like SAM-binding methyltransferase superfamily. rRNA adenine N(6)-methyltransferase family.

In terms of biological role, involved in erythromycin resistance. This is rRNA adenine N-6-methyltransferase (ermF) from Bacteroides fragilis.